The following is a 516-amino-acid chain: Immunoglobulin G-binding protein A (516 aa).

Residues 1–36 (MKKKNIYSIRKLGVGIASVTLGTLLISGGVTPAANA) form the signal peptide. A YSIRK-G/S signaling motif motif is present at residues 7-18 (YSIRKLGVGIAS). Residues 37–92 (AQHDEAQQNAFYQVLNMPNLNADQRNGFIQSLKDDPSQSANVLGEAQKLNDSQAPK) form an Immunoglobulin-binding region E repeat. The Immunoglobulin-binding region D repeat unit spans residues 93–153 (ADAQQNNFNK…KKLNESQAPK (61 aa)). Residues 154-211 (ADNNFNKEQQNAFYEILNMPNLNEEQRNGFIQSLKDDPSQSANLLSEAKKLNESQAPK) form an Immunoglobulin-binding region A repeat. Residues 212–269 (ADNKFNKEQQNAFYEILHLPNLNEEQRNGFIQSLKDDPSQSANLLAEAKKLNDAQAPK) form an Immunoglobulin-binding region B repeat. One copy of the Immunoglobulin-binding region C repeat lies at 270–327 (ADNKFNKEQQNAFYEILHLPNLTEEQRNGFIQSLKDDPSVSKEILAEAKKLNDAQAPK). A compositionally biased stretch (basic and acidic residues) spans 318–420 (KKLNDAQAPK…GNKPGKEDGN (103 aa)). 2 disordered regions span residues 318-440 (KKLN…ANGT) and 467-487 (KKQP…ETGE). A run of 11 repeats spans residues 333–340 (KPGKEDNN), 341–348 (KPGKEDNN), 349–356 (KPGKEDNN), 357–364 (KPGKEDNN), 365–372 (KPGKEDGN), 373–380 (KPGKEDNK), 381–388 (KPGKEDGN), 389–396 (KPGKEDNK), 397–404 (KPGKEDGN), 405–412 (KPGKEDGN), and 413–420 (KPGKEDGN). The 11 X 8 AA approximate tandem repeats stretch occupies residues 333 to 420 (KPGKEDNNKP…GNKPGKEDGN (88 aa)). A LysM domain is found at 421–465 (GVHVVKPGDTVNDIAKANGTTADKIAADNKLADKNMIKPGQELVV). An LPXTG sorting signal motif is present at residues 482–486 (LPETG). Position 485 is a pentaglycyl murein peptidoglycan amidated threonine (T485). Residues 486–516 (GEENPFIGTTVFGGLSLALGAALLAGRRREL) constitute a propeptide, removed by sortase A.

This sequence belongs to the immunoglobulin-binding protein SpA family. In terms of assembly, interacts with host TNFRSF1A; this interaction leads to the stimulation of both surface expression and shedding of TNFRSF1A.

The protein resides in the secreted. The protein localises to the cell wall. Plays a role in the inhibition of the host innate and adaptive immune responses. Possesses five immunoglobulin-binding domains that capture both the fragment crystallizable region (Fc region) and the Fab region (part of Ig that identifies antigen) of immunoglobulins. In turn, Staphylococcus aureus is protected from phagocytic killing via inhibition of Ig Fc region. In addition, the host elicited B-cell response is prevented due to a decrease of antibody-secreting cell proliferation that enter the bone marrow, thereby decreasing long-term antibody production. Inhibits osteogenesis by preventing osteoblast proliferation and expression of alkaline phosphatase, type I collagen, osteopontin and osteocalcin. Acts directly as a pro-inflammatory factor in the lung through its ability to bind and activate tumor necrosis factor alpha receptor 1/TNFRSF1A. This is Immunoglobulin G-binding protein A (spa) from Staphylococcus aureus (strain NCTC 8325 / PS 47).